The following is a 370-amino-acid chain: GTPase Obg (370 aa).

One can recognise an Obg domain in the interval 1–159 (MKFIDEARIE…RKLKLELKVL (159 aa)). Residues 129 to 148 (HFKSSTNRAPRQKTNGKSGE) form a disordered region. Polar residues predominate over residues 130-145 (FKSSTNRAPRQKTNGK). Residues 160–334 (ADVGLLGMPN…LCYSLQDYLD (175 aa)) enclose the OBG-type G domain. GTP contacts are provided by residues 166-173 (GMPNAGKS), 191-195 (FTTLH), 213-216 (DIPG), 284-287 (NKVD), and 315-317 (SAL). Mg(2+) contacts are provided by Ser173 and Thr193.

This sequence belongs to the TRAFAC class OBG-HflX-like GTPase superfamily. OBG GTPase family. Monomer. Mg(2+) is required as a cofactor.

It is found in the cytoplasm. Its function is as follows. An essential GTPase which binds GTP, GDP and possibly (p)ppGpp with moderate affinity, with high nucleotide exchange rates and a fairly low GTP hydrolysis rate. Plays a role in control of the cell cycle, stress response, ribosome biogenesis and in those bacteria that undergo differentiation, in morphogenesis control. This Polynucleobacter necessarius subsp. necessarius (strain STIR1) protein is GTPase Obg.